We begin with the raw amino-acid sequence, 274 residues long: NH(3)-dependent NAD(+) synthetase (274 aa).

46–53 is an ATP binding site; the sequence is GISGGQDS. Asp-52 contributes to the Mg(2+) binding site. Arg-140 is a binding site for deamido-NAD(+). Residue Thr-160 participates in ATP binding. Glu-165 is a binding site for Mg(2+). Deamido-NAD(+) contacts are provided by Lys-173 and Asp-180. Residues Lys-189 and Thr-211 each contribute to the ATP site. Deamido-NAD(+) is bound at residue 260-261; it reads HK.

This sequence belongs to the NAD synthetase family. As to quaternary structure, homodimer.

The catalysed reaction is deamido-NAD(+) + NH4(+) + ATP = AMP + diphosphate + NAD(+) + H(+). The protein operates within cofactor biosynthesis; NAD(+) biosynthesis; NAD(+) from deamido-NAD(+) (ammonia route): step 1/1. Its function is as follows. Catalyzes the ATP-dependent amidation of deamido-NAD to form NAD. Uses ammonia as a nitrogen source. This Streptococcus pneumoniae serotype 19F (strain G54) protein is NH(3)-dependent NAD(+) synthetase.